We begin with the raw amino-acid sequence, 244 residues long: Protein-L-isoaspartate O-methyltransferase 2 (244 aa).

Serine 88 is a catalytic residue.

It belongs to the methyltransferase superfamily. L-isoaspartyl/D-aspartyl protein methyltransferase family.

Its subcellular location is the cytoplasm. The enzyme catalyses [protein]-L-isoaspartate + S-adenosyl-L-methionine = [protein]-L-isoaspartate alpha-methyl ester + S-adenosyl-L-homocysteine. Functionally, catalyzes the methyl esterification of L-isoaspartyl residues in peptides and proteins that result from spontaneous decomposition of normal L-aspartyl and L-asparaginyl residues. It plays a role in the repair and/or degradation of damaged proteins. The protein is Protein-L-isoaspartate O-methyltransferase 2 of Shewanella sediminis (strain HAW-EB3).